Reading from the N-terminus, the 321-residue chain is NADPH-dependent codeinone reductase 1-5 (321 aa).

2 residues coordinate NADPH: Thr27 and Asp51. Catalysis depends on proton donor residues Tyr56 and His119. Residue His119 coordinates substrate. Positions 187, 214, 216, 264, and 269 each coordinate NADPH.

It belongs to the aldo/keto reductase family. Latex secreting cells (laticifer cells). Expressed constitutively and ubiquitously with highest levels in capsules.

It is found in the cytoplasm. The protein resides in the cytosol. The catalysed reaction is codeine + NADP(+) = codeinone + NADPH + H(+). It carries out the reaction neopine + NADP(+) = neopinone + NADPH + H(+). It catalyses the reaction morphine + NADP(+) = morphinone + NADPH + H(+). The enzyme catalyses neomorphine + NADP(+) = neomorphinone + NADPH + H(+). Its pathway is alkaloid biosynthesis; morphine biosynthesis. Functionally, NADPH-dependent codeinone reductase involved in biosynthesis of morphinan-type benzylisoquinoline and opiate alkaloids natural products. Reduces codeinone to codeine in the penultimate step in morphine biosynthesis. Can use morphinone, hydrocodone and hydromorphone as substrate during reductive reaction with NADPH as cofactor, and morphine and dihydrocodeine as substrate during oxidative reaction with NADP as cofactor. Converts morphinone to morphine, and neomorphinone to neomorphine. Reduces irreversibly neopinone, a spontaneous isomer of codeinone, to neopine; in planta, neopine levels are limited to low levels. This Papaver somniferum (Opium poppy) protein is NADPH-dependent codeinone reductase 1-5.